The chain runs to 355 residues: Myricetin 7/4'-O-methyltransferase 2 (355 aa).

Residue Asp-221 participates in S-adenosyl-L-methionine binding. The active-site Proton acceptor is the His-259.

The protein belongs to the class I-like SAM-binding methyltransferase superfamily. Cation-independent O-methyltransferase family. As to quaternary structure, homodimer. As to expression, mainly expressed in leaves secreting glandular trichomes types 1 and 4 and, to a lesser extent, in storage trichomes type 6.

The enzyme catalyses quercetin + S-adenosyl-L-methionine = rhamnetin + S-adenosyl-L-homocysteine + H(+). The catalysed reaction is kaempferol + S-adenosyl-L-methionine = kaempferide + S-adenosyl-L-homocysteine + H(+). It catalyses the reaction myricetin + S-adenosyl-L-methionine = 7-O-methylmyricetin + S-adenosyl-L-homocysteine + H(+). It carries out the reaction kaempferide + S-adenosyl-L-methionine = 7,4'-O-dimethylkaempferol + S-adenosyl-L-homocysteine + H(+). The enzyme catalyses isorhamnetin + S-adenosyl-L-methionine = 3',4'-O-dimethylquercetin + S-adenosyl-L-homocysteine + 2 H(+). The catalysed reaction is 3',4',5,7-tetrahydroxy-3-methoxyflavone + S-adenosyl-L-methionine = 3',4',5-trihydroxy-3,7-dimethoxyflavone + S-adenosyl-L-homocysteine + H(+). It catalyses the reaction rhamnetin + S-adenosyl-L-methionine = 7,4'-O-dimethylquercetin + S-adenosyl-L-homocysteine + H(+). It carries out the reaction syringetin + S-adenosyl-L-methionine = 7,3',5'-O-trimethylmyricetin + S-adenosyl-L-homocysteine + H(+). The enzyme catalyses 3',4',5'-O-trimethylmyricetin + S-adenosyl-L-methionine = 7,3',4',5'-O-tetramethylmyricetin + S-adenosyl-L-homocysteine. Its pathway is flavonoid metabolism. In terms of biological role, flavonoid 7/4'-O-methyltransferase involved in the biosynthesis of polymethoxylated flavonoids natural products such as myricetin derivatives, aroma compounds possessing antioxidant properties and exhibiting pharmacological activities such as anti-carcinogen, anti-viral, anti-thrombotic, anti-diabetic, anti-atherosclerotic, and anti-inflammatory effects. Catalyzes S-adenosylmethionine-dependent regioselective 7/4'-O-methylation of flavonoids; active on various hydroxylated flavonoid substrates, including myricetin, quercetin and kaempferol. Mediates the formation of 4'-methyl derivatives from kaempferol, 3'-methyl quercetin (isorhamnetin), 7-methyl quercetin (rhamnetin) and 3'-methyl myricetin, producing 4'-methyl kaempferol (kaempferide), 3',4'-dimethyl quercetin (4'-O-methyl isorhamnetin), 7,4'-dimethyl quercetin (4'-O-methyl rhamnetin, rhamnacene) and 3',4'-dimethyl myricetin, respectively. Triggers the 7-O-methylation of quercetin, myricetin, 4'-methyl kaempferol (kaempferide), 3-methyl quercetin, 3',5'-dimethyl myricetin (syringetin) and 3',4',5'-trimethyl myricetin, thus leading to production of 7-methyl quercetin (rhamnetin), 7-methyl myricetin, 7,4'-dimethyl kaempferol (7-O-methyl kaempferide), 3,7-dimethyl quercetin, 7,3',5'-trimethyl myricetin (7-O-methyl syringetin) and 7,3',4',5'-tetramethyl myricetin, respectively. The sequence is that of Myricetin 7/4'-O-methyltransferase 2 from Solanum habrochaites (Wild tomato).